Consider the following 440-residue polypeptide: T-box transcription factor T homolog 2 (440 aa).

The T-box DNA-binding region spans 44-215; sequence LWEKFKSLTN…HNPFAKAFLD (172 aa). Disordered regions lie at residues 282 to 303 and 393 to 440; these read APYP…DTAA and TTAS…MPSM. Residues 409-440 show a composition bias toward polar residues; that stretch reads STDSGYGHSTTPPAPQTRITSNNWSPMTMPSM.

In terms of tissue distribution, mesoderm and notochord.

It is found in the nucleus. Its function is as follows. Involved in the transcriptional regulation of genes required for mesoderm formation and differentiation. The sequence is that of T-box transcription factor T homolog 2 from Branchiostoma floridae (Florida lancelet).